The sequence spans 423 residues: tRNA(Met) cytidine acetate ligase (423 aa).

Residues 7–20, glycine 102, asparagine 165, and arginine 190 contribute to the ATP site; that span reads VVEY…HLYH.

The protein belongs to the TmcAL family.

Its subcellular location is the cytoplasm. The catalysed reaction is cytidine(34) in elongator tRNA(Met) + acetate + ATP = N(4)-acetylcytidine(34) in elongator tRNA(Met) + AMP + diphosphate. Functionally, catalyzes the formation of N(4)-acetylcytidine (ac(4)C) at the wobble position of elongator tRNA(Met), using acetate and ATP as substrates. First activates an acetate ion to form acetyladenylate (Ac-AMP) and then transfers the acetyl group to tRNA to form ac(4)C34. In Thermosipho africanus (strain TCF52B), this protein is tRNA(Met) cytidine acetate ligase.